Here is a 456-residue protein sequence, read N- to C-terminus: UDP-N-acetylmuramate--L-alanine ligase (456 aa).

112–118 (GTHGKTT) contacts ATP.

This sequence belongs to the MurCDEF family.

It is found in the cytoplasm. The enzyme catalyses UDP-N-acetyl-alpha-D-muramate + L-alanine + ATP = UDP-N-acetyl-alpha-D-muramoyl-L-alanine + ADP + phosphate + H(+). It functions in the pathway cell wall biogenesis; peptidoglycan biosynthesis. Its function is as follows. Cell wall formation. The polypeptide is UDP-N-acetylmuramate--L-alanine ligase (Trichlorobacter lovleyi (strain ATCC BAA-1151 / DSM 17278 / SZ) (Geobacter lovleyi)).